Consider the following 311-residue polypeptide: VQ motif-containing protein 9 (311 aa).

A compositionally biased stretch (low complexity) spans 1 to 27 (MDKSCNSSGDSSAVSASATSSTGNNTT). The segment at 1 to 78 (MDKSCNSSGD…QINQGNLHQH (78 aa)) is disordered. The VQ signature appears at 90–99 (FRDVVQKLTG). 3 disordered regions span residues 103–125 (HERI…SSRL), 228–266 (QQEN…PPLF), and 290–311 (GQLG…YKGH). Residues 240–249 (FPPPHPPPPS) are compositionally biased toward pro residues. Residues 290–302 (GQLGFPVSPTTVP) show a composition bias toward low complexity.

Interacts (via N-terminus) with WRKY8. As to expression, highly expressed in roots and at lower levels in rosette leaves, cauline leaves, stems, flowers and siliques.

The protein resides in the nucleus. Its function is as follows. Functions as a negative regulator of salt stress response. Functions as a repressor of WRKY8 transcription factor by decreasing the DNA-binding activity of WRKY8 and acts antagonistically with WRKY8 to regulate sodium and potassium homeostasis under salt stress. This is VQ motif-containing protein 9 from Arabidopsis thaliana (Mouse-ear cress).